The primary structure comprises 323 residues: Serine/threonine-protein phosphatase PP1-gamma catalytic subunit (323 aa).

Mn(2+) contacts are provided by Asp-64, His-66, Asp-92, and Asn-124. His-125 serves as the catalytic Proton donor. His-173 and His-248 together coordinate Mn(2+). Residues 300–323 form a disordered region; it reads EKKKPNASRPVTPPRGMITKQAKK.

This sequence belongs to the PPP phosphatase family. PP-1 subfamily. PP1 comprises a catalytic subunit, ppp1c1, ppp1cb or ppp1cc, which is folded into its native form by inhibitor 2 and glycogen synthetase kinase 3, and then is complexed to one or several targeting or regulatory subunits. It depends on Mn(2+) as a cofactor.

It localises to the cytoplasm. It is found in the nucleus. The protein localises to the cleavage furrow. Its subcellular location is the nucleolus. The protein resides in the nucleoplasm. It localises to the chromosome. It is found in the centromere. The protein localises to the kinetochore. Its subcellular location is the nucleus speckle. The protein resides in the midbody. It localises to the mitochondrion. It is found in the cytoskeleton. The protein localises to the microtubule organizing center. The enzyme catalyses O-phospho-L-seryl-[protein] + H2O = L-seryl-[protein] + phosphate. The catalysed reaction is O-phospho-L-threonyl-[protein] + H2O = L-threonyl-[protein] + phosphate. Its function is as follows. Protein phosphatase 1 (PP1) is essential for cell division, and participates in the regulation of glycogen metabolism, muscle contractility and protein synthesis. Promotes nuclear envelope reassembly by targeting nuclear membrane vesicles to chromatin at the end of mitosis. Acts by dephosphorylating membrane proteins such as lamin B receptor (lbr) to regulate the binding of membrane proteins to chromatin. In Xenopus tropicalis (Western clawed frog), this protein is Serine/threonine-protein phosphatase PP1-gamma catalytic subunit.